Consider the following 445-residue polypeptide: MTEYLSVSALTKYIKYKFDQDPHLQSVLIKGELSNFKKHSSGHLYFNVKDKESVISGMMFKGNASKLGFEPKEGDEVLIEARVSVYERRGNYQIYVNKMQLDGIGNLYQKLELLKKKLKKEGYFDQSNKKLIPKYPKKIAVLTASTGAAIRDIHSTINNRYPLVEQIQISTLVQGTQARQDIIEKIQYADSLDVDTIIVGRGGGSIEDLWNFNEEDVVKTIFNCQTPIISAVGHETDFTLSDFVADVRAATPTQAAVIATPDQYELLQQIKQYEYTLSRYIKQYIEHQKKQLNHISSYYKFKQPSLLYDQQIQKRDELERQLNHLLNTKVEKSKHHLKLLQQSFNFKNLNQQITQEKQSIYQLHSRLSKIMSNNITNLKTVLKNKLESLNNLSPTNTMLRGYAIVNKDNEVVTSTHKLNENDQISLTMKDGSVDATVKKVRCNDE.

It belongs to the XseA family. Heterooligomer composed of large and small subunits.

It is found in the cytoplasm. The catalysed reaction is Exonucleolytic cleavage in either 5'- to 3'- or 3'- to 5'-direction to yield nucleoside 5'-phosphates.. Functionally, bidirectionally degrades single-stranded DNA into large acid-insoluble oligonucleotides, which are then degraded further into small acid-soluble oligonucleotides. This chain is Exodeoxyribonuclease 7 large subunit, found in Staphylococcus epidermidis (strain ATCC 35984 / DSM 28319 / BCRC 17069 / CCUG 31568 / BM 3577 / RP62A).